A 689-amino-acid chain; its full sequence is Glycine--tRNA ligase beta subunit (689 aa).

Belongs to the class-II aminoacyl-tRNA synthetase family. In terms of assembly, tetramer of two alpha and two beta subunits.

It localises to the cytoplasm. It carries out the reaction tRNA(Gly) + glycine + ATP = glycyl-tRNA(Gly) + AMP + diphosphate. The sequence is that of Glycine--tRNA ligase beta subunit from Shewanella halifaxensis (strain HAW-EB4).